Here is a 317-residue protein sequence, read N- to C-terminus: Secreted frizzled-related protein 5 (317 aa).

The first 29 residues, 1-29, serve as a signal peptide directing secretion; that stretch reads MRAAAAGGGVRTAALALLLGALHWAPARC. The FZ domain occupies 48-165; it reads SKPPQCLDIP…PLDNDLCIAV (118 aa). Intrachain disulfides connect C53-C116, C63-C109, C100-C135, C124-C162, C128-C152, C181-C253, C184-C255, and C198-C303. Residues 181-303 form the NTR domain; sequence CAQCEMEHSA…AVKFMFSYPC (123 aa).

It belongs to the secreted frizzled-related protein (sFRP) family. Highly expressed in the retinal pigment epithelium (RPE) and pancreas. Weak expression in heart, liver and muscle.

The protein resides in the secreted. Its function is as follows. Soluble frizzled-related proteins (sFRPS) function as modulators of Wnt signaling through direct interaction with Wnts. They have a role in regulating cell growth and differentiation in specific cell types. SFRP5 may be involved in determining the polarity of photoreceptor, and perhaps, other cells in the retina. This chain is Secreted frizzled-related protein 5 (SFRP5), found in Homo sapiens (Human).